Consider the following 138-residue polypeptide: Ribosome-binding factor A (138 aa).

Positions 1 to 20 are enriched in low complexity; that stretch reads MSSRPPSSSGPAGIPKGAPS. The disordered stretch occupies residues 1-21; sequence MSSRPPSSSGPAGIPKGAPSQ.

This sequence belongs to the RbfA family. As to quaternary structure, monomer. Binds 30S ribosomal subunits, but not 50S ribosomal subunits or 70S ribosomes.

It is found in the cytoplasm. Functionally, one of several proteins that assist in the late maturation steps of the functional core of the 30S ribosomal subunit. Associates with free 30S ribosomal subunits (but not with 30S subunits that are part of 70S ribosomes or polysomes). Required for efficient processing of 16S rRNA. May interact with the 5'-terminal helix region of 16S rRNA. This Granulibacter bethesdensis (strain ATCC BAA-1260 / CGDNIH1) protein is Ribosome-binding factor A.